The sequence spans 531 residues: Zinc finger C2HC domain-containing protein 1C (531 aa).

The disordered stretch occupies residues M16–L45. Residues Y35–S44 are compositionally biased toward low complexity. The stretch at V209–I264 forms a coiled coil. 2 disordered regions span residues F290–D318 and N334–G387. Residues E293–E305 show a composition bias toward basic and acidic residues. The span at R306–Q315 shows a compositional bias: polar residues. Residues K335–M345 are compositionally biased toward basic and acidic residues. Residues S366 to S380 are compositionally biased toward low complexity. C2HC/C3H-type zinc fingers lie at residues Q385 to S414 and D493 to R522. Zn(2+)-binding residues include C389, C392, H404, C408, C497, C500, H512, and C516.

This sequence belongs to the ZC2HC1 family. The cofactor is Zn(2+).

The protein is Zinc finger C2HC domain-containing protein 1C (ZC2HC1C) of Macaca fascicularis (Crab-eating macaque).